The primary structure comprises 265 residues: Phosphatidylserine decarboxylase proenzyme (265 aa).

Catalysis depends on serine 183, which acts as the Schiff-base intermediate with substrate; via pyruvic acid. Serine 183 bears the Pyruvic acid (Ser); by autocatalysis mark. The disordered stretch occupies residues 216 to 246; that stretch reads TAPQTESEPESEPALQTAPVETAANPSAEQR.

The protein belongs to the phosphatidylserine decarboxylase family. PSD-A subfamily. In terms of assembly, heterodimer of a large membrane-associated beta subunit and a small pyruvoyl-containing alpha subunit. Requires pyruvate as cofactor. Post-translationally, is synthesized initially as an inactive proenzyme. Formation of the active enzyme involves a self-maturation process in which the active site pyruvoyl group is generated from an internal serine residue via an autocatalytic post-translational modification. Two non-identical subunits are generated from the proenzyme in this reaction, and the pyruvate is formed at the N-terminus of the alpha chain, which is derived from the carboxyl end of the proenzyme. The post-translation cleavage follows an unusual pathway, termed non-hydrolytic serinolysis, in which the side chain hydroxyl group of the serine supplies its oxygen atom to form the C-terminus of the beta chain, while the remainder of the serine residue undergoes an oxidative deamination to produce ammonia and the pyruvoyl prosthetic group on the alpha chain.

It localises to the cell membrane. It catalyses the reaction a 1,2-diacyl-sn-glycero-3-phospho-L-serine + H(+) = a 1,2-diacyl-sn-glycero-3-phosphoethanolamine + CO2. It functions in the pathway phospholipid metabolism; phosphatidylethanolamine biosynthesis; phosphatidylethanolamine from CDP-diacylglycerol: step 2/2. In terms of biological role, catalyzes the formation of phosphatidylethanolamine (PtdEtn) from phosphatidylserine (PtdSer). The sequence is that of Phosphatidylserine decarboxylase proenzyme from Neisseria meningitidis serogroup B (strain ATCC BAA-335 / MC58).